Here is a 327-residue protein sequence, read N- to C-terminus: MIFSILEHILTHISFSVVSIVLTIYFLTFLVNLDEIIGFFDSSDKGIIITFFGITGLLFTRWIYSGHFPLSNLYESLIFLAWAFSIIHMVSYFNKKKKKNLNAITAPSAIFIQGFAASGLLNMPQSAILVPALQSQWLMMHVSMMILGYGALLCGSLLSIALLVITFRKVGPTFLKKNLKKKFLLNELFSFDVLYYINEKNSILLQQNINFSFSRNYYRYQLIEQLDFLSFRIISLGFIFLTIGILSGAVWANETWGSYWNWDPKETWAFITWTIFAIYLHIKTNRNVKGINSAIVAAIGFLLIWICYFGVNLLGIGLHSYGSFTSS.

The next 8 membrane-spanning stretches (helical) occupy residues 13–33 (ISFSVVSIVLTIYFLTFLVNL), 46–66 (GIIITFFGITGLLFTRWIYSG), 73–93 (LYESLIFLAWAFSIIHMVSYF), 101–121 (LNAITAPSAIFIQGFAASGLL), 145–165 (MILGYGALLCGSLLSIALLVI), 233–253 (IISLGFIFLTIGILSGAVWAN), 262–282 (WDPKETWAFITWTIFAIYLHI), and 294–314 (AIVAAIGFLLIWICYFGVNLL).

The protein belongs to the CcmF/CycK/Ccl1/NrfE/CcsA family. In terms of assembly, may interact with Ccs1.

Its subcellular location is the plastid. The protein localises to the chloroplast thylakoid membrane. Required during biogenesis of c-type cytochromes (cytochrome c6 and cytochrome f) at the step of heme attachment. This Lobularia maritima (Sweet alyssum) protein is Cytochrome c biogenesis protein CcsA.